The sequence spans 314 residues: Malate dehydrogenase (314 aa).

NAD(+)-binding positions include 11-16 (GSGNIG) and aspartate 35. Residues arginine 84 and arginine 90 each coordinate substrate. NAD(+) is bound by residues asparagine 97 and 120–122 (ITN). Substrate contacts are provided by asparagine 122 and arginine 153. Histidine 177 functions as the Proton acceptor in the catalytic mechanism.

It belongs to the LDH/MDH superfamily. MDH type 3 family.

The catalysed reaction is (S)-malate + NAD(+) = oxaloacetate + NADH + H(+). In terms of biological role, catalyzes the reversible oxidation of malate to oxaloacetate. The chain is Malate dehydrogenase from Rickettsia rickettsii (strain Iowa).